The primary structure comprises 955 residues: Outer capsid protein VP2 (955 aa).

This sequence belongs to the orbivirus VP2 family.

The protein localises to the virion. Functionally, the VP2 protein is one of the two proteins (with VP5) which constitute the virus particle outer capsid. It is the major target of the host immunogenic response. Responsible for viral attachment to target host cell, probably by binding to sialic acid. This attachment induces virion internalization predominantly through clathrin-dependent endocytosis. The chain is Outer capsid protein VP2 (Segment-2) from Antilocapra americana (Pronghorn).